The sequence spans 307 residues: Serine/threonine-protein phosphatase 4 catalytic subunit (307 aa).

N-acetylalanine is present on Ala2. 4 residues coordinate Mn(2+): Asp54, His56, Asp82, and Asn114. His115 serves as the catalytic Proton donor. Mn(2+) contacts are provided by His164 and His238. The residue at position 307 (Leu307) is a Leucine methyl ester.

It belongs to the PPP phosphatase family. PP-4 (PP-X) subfamily. As to quaternary structure, serine/threonine-protein phosphatase 4 (PP4) occurs in different assemblies of the catalytic and one or more regulatory subunits. Component of the PP4 complexes PPP4C-PPP4R1, PPP4C-PPP4R2, PPP4C-PPP4R2-PPP4R3A, PPP4C-PPP4R2-PPP4R3B and PPP4C-PPP4R4. The PPP4C-PPP4R2 complex appears to be a tetramer composed of 2 molecules of PPP4C and 2 molecules of PPP4R2. Interacts with REL, NFKB1/p50 and RELA. Interacts with SMN1 and GEMIN4. Interacts with IRS4 (phosphorylated). Interacts with SMEK1/PPP4R3A; the interaction requires PP4R2. Interacts with HDAC3. The cofactor is Mn(2+). Post-translationally, methylation at the C-terminal Leu-307 is critical for interactions with regulatory subunits and functions in DNA repair.

Its subcellular location is the cytoplasm. It is found in the nucleus. It localises to the cytoskeleton. The protein resides in the microtubule organizing center. The protein localises to the centrosome. The enzyme catalyses O-phospho-L-seryl-[protein] + H2O = L-seryl-[protein] + phosphate. The catalysed reaction is O-phospho-L-threonyl-[protein] + H2O = L-threonyl-[protein] + phosphate. Protein phosphatase that is involved in many processes such as microtubule organization at centrosomes, maturation of spliceosomal snRNPs, apoptosis, DNA repair, tumor necrosis factor (TNF)-alpha signaling, activation of c-Jun N-terminal kinase MAPK8, regulation of histone acetylation, DNA damage checkpoint signaling, NF-kappa-B activation and cell migration. The PPP4C-PPP4R1 PP4 complex may play a role in dephosphorylation and regulation of HDAC3. The PPP4C-PPP4R2-PPP4R3A PP4 complex specifically dephosphorylates H2AX phosphorylated on Ser-140 (gamma-H2AX) generated during DNA replication and required for DNA double strand break repair. Dephosphorylates NDEL1 at CDK1 phosphorylation sites and negatively regulates CDK1 activity in interphase. In response to DNA damage, catalyzes RPA2 dephosphorylation, an essential step for DNA repair since it allows the efficient RPA2-mediated recruitment of RAD51 to chromatin. The polypeptide is Serine/threonine-protein phosphatase 4 catalytic subunit (PPP4C) (Homo sapiens (Human)).